The primary structure comprises 234 residues: Sugar fermentation stimulation protein A (234 aa).

A DNA-binding region (H-T-H motif) is located at residues 201 to 220 (LLSEAQQRGVEILAYKAEIS).

Belongs to the SfsA family.

Its function is as follows. Binds to DNA non-specifically. Could be a regulatory factor involved in maltose metabolism. The chain is Sugar fermentation stimulation protein A from Shigella dysenteriae serotype 1 (strain Sd197).